The sequence spans 259 residues: MSLLSRMRKINDMLQKSGVQHVNFREMAETLRDVISANIFVVSRRGKLLGFAIKQEIENERMKKMLEDRQFPEEYTTGLFKVEETSANLDINSEFTAFPVENKELFKTGLTTIVPISGGGQRLGTLILARLNDSFNDDDLILAEYGATVVGMEILHEKTQEIEEEARSKAVVQMAISSLSYSELEAVEHIFEELDGKEGLLVASKIADRVGITRSVIVNALRKLESAGVIESRSLGMKGTYIKVLNDKFLVELEKIKAS.

A GAF domain region spans residues 1–155 (MSLLSRMRKI…GATVVGMEIL (155 aa)). The H-T-H motif DNA-binding region spans 203–222 (ASKIADRVGITRSVIVNALR). Residue Ser-215 is modified to Phosphoserine.

It belongs to the CodY family.

It localises to the cytoplasm. Its function is as follows. DNA-binding global transcriptional regulator which is involved in the adaptive response to starvation and acts by directly or indirectly controlling the expression of numerous genes in response to nutrient availability. During rapid exponential growth, CodY is highly active and represses genes whose products allow adaptation to nutrient depletion. This Halalkalibacterium halodurans (strain ATCC BAA-125 / DSM 18197 / FERM 7344 / JCM 9153 / C-125) (Bacillus halodurans) protein is Global transcriptional regulator CodY.